Here is a 190-residue protein sequence, read N- to C-terminus: Large ribosomal subunit protein uL5 (190 aa).

Belongs to the universal ribosomal protein uL5 family. As to quaternary structure, part of the 50S ribosomal subunit; part of the 5S rRNA/L5/L18/L25 subcomplex. Contacts the 5S rRNA and the P site tRNA. Forms a bridge to the 30S subunit in the 70S ribosome.

Its function is as follows. This is one of the proteins that bind and probably mediate the attachment of the 5S RNA into the large ribosomal subunit, where it forms part of the central protuberance. In the 70S ribosome it contacts protein S13 of the 30S subunit (bridge B1b), connecting the 2 subunits; this bridge is implicated in subunit movement. Contacts the P site tRNA; the 5S rRNA and some of its associated proteins might help stabilize positioning of ribosome-bound tRNAs. The polypeptide is Large ribosomal subunit protein uL5 (Blochmanniella floridana).